The sequence spans 417 residues: Serine hydroxymethyltransferase (417 aa).

(6S)-5,6,7,8-tetrahydrofolate-binding positions include leucine 121 and 125-127 (GHL). Lysine 229 is modified (N6-(pyridoxal phosphate)lysine). 355-357 (SPF) is a binding site for (6S)-5,6,7,8-tetrahydrofolate.

The protein belongs to the SHMT family. In terms of assembly, homodimer. The cofactor is pyridoxal 5'-phosphate.

It is found in the cytoplasm. The catalysed reaction is (6R)-5,10-methylene-5,6,7,8-tetrahydrofolate + glycine + H2O = (6S)-5,6,7,8-tetrahydrofolate + L-serine. It participates in one-carbon metabolism; tetrahydrofolate interconversion. It functions in the pathway amino-acid biosynthesis; glycine biosynthesis; glycine from L-serine: step 1/1. Functionally, catalyzes the reversible interconversion of serine and glycine with tetrahydrofolate (THF) serving as the one-carbon carrier. This reaction serves as the major source of one-carbon groups required for the biosynthesis of purines, thymidylate, methionine, and other important biomolecules. Also exhibits THF-independent aldolase activity toward beta-hydroxyamino acids, producing glycine and aldehydes, via a retro-aldol mechanism. In Buchnera aphidicola subsp. Acyrthosiphon pisum (strain APS) (Acyrthosiphon pisum symbiotic bacterium), this protein is Serine hydroxymethyltransferase.